The primary structure comprises 512 residues: Tyrosine decarboxylase (512 aa).

L-tyrosine is bound by residues P100, H205, and H320. Residue K321 is modified to N6-(pyridoxal phosphate)lysine. Y350 serves as a coordination point for L-tyrosine.

Belongs to the group II decarboxylase family. Homodimer. Pyridoxal 5'-phosphate is required as a cofactor. In terms of tissue distribution, mainly expressed in roots, stems and capsule walls.

It catalyses the reaction L-tyrosine + H(+) = tyramine + CO2. Its function is as follows. Tyrosine decarboxylase that converts tyrosine into tyramine, a precursor of isoquinoline alkaloids and various amides. The sequence is that of Tyrosine decarboxylase from Papaver somniferum (Opium poppy).